Consider the following 878-residue polypeptide: MDDDQQFCLRWNNHQSTLISVFDTLLENETLVDCTLAAEGKFLKAHKVVLSACSPYFATLLQEQYDKHPIFILKDVKYQELRAMMDYMYRGEVNISQDQLAALLKAAESLQIKGLSDNRTGGGVAPKPESSGHHRGGKLSGAYTLEQTKRARLATGGAMDTSGDVSGSREGSSSPSRRRRKVRRRSMENDAHDNSNSSVLQAAASNQSILQQTGAGLAVSALVTTQLSSGPAAGTSSQASSTQQQQPLTSTNVTKKTESAKLTSSTAAPASGASASAAVQQAHLHQQQAQTTSDAINTENVQAQSQGGAQGVQGDDEDIDEGSAVGGPNSATGPNPASASASAVHAGVVVKQLASVVDKSSSNHKHKIKDNSVSSVGSEMVIEPKAEYDDDAHDENVEDLTLDEEDMTMEELDQTAGTSQGGEGSSQTYATWQHDRSQDELGLMAQDAQQRDPQDGYWTILETVPYSIASAAPNQTLTTATTLSNGGSSLLTGATVVVELPPDDLGNPVGNIQYTIPALTKNATTNTNTTSLLHKPQATTIQIVKQQHQQQHQQQHQHPQQQHQPQQQQHRQHLTIQQSQTHARQEYIKIDTSRLEDKMLLRDVMQYGATSIAMAPQSATTTVVSTHPVESGLLLADADEAERELELEAMKVDQHDEEHLLDDEGYVIEKIHGDGETVNQPQEKLYINGMSNIIHTATTMTLQPDDCKYACNVCGKTYKIKGSLKRHKNYECGVEPNLKCPHCPHKCKCVLAQVVNFVRHGPKNQLLCQCGRYYNTLSRLMLHQREECQDFKRFQCDFCLKWFKRRSHLNRHKKLHDAELFLEPLSKQKPKTTSGQNLSHDANTDDEVATTNPAATEDESNYPFTSEIKIENEFDEFI.

Residues 32 to 97 (VDCTLAAEGK…MYRGEVNISQ (66 aa)) enclose the BTB domain. 3 disordered regions span residues 115 to 200 (LSDN…SSVL), 228 to 340 (SSGP…ASAS), and 542 to 583 (QIVK…QTHA). Low complexity-rich tracts occupy residues 162 to 175 (SGDV…SSSP), 228 to 251 (SSGP…LTST), 263 to 293 (TSST…QTTS), 329 to 340 (NSATGPNPASAS), and 546 to 569 (QQHQ…QQQQ). A C2H2-type 1; degenerate zinc finger spans residues 709–731 (YACNVCGKTYKIKGSLKRHKNYE). The C2H2-type 2 zinc finger occupies 794-816 (FQCDFCLKWFKRRSHLNRHKKLH). Residues 826-863 (SKQKPKTTSGQNLSHDANTDDEVATTNPAATEDESNYP) are disordered. The segment covering 831-841 (KTTSGQNLSHD) has biased composition (polar residues).

By stage 11, isoform W, isoform X and isoform Y are expressed throughout the mesoderm, whereas isoform O is expressed in both mesoderm and ectoderm. From stage 15, expression of isoform O expands to all tissues, whereas expression of isoform W, isoform X and isoform Y becomes restricted during later stages; starting from stage 14 to 16, isoform W, isoform X and isoform Y are expressed in muscle. From stages 14 and 15, isoform W and isoform Y are expressed in the gut. For some isoforms, expression is also seen in specific types of cells in the embryo; isoform O is expressed in the ventral furrow at stage 5 and in the dorsal epidermis from stage 7. Isoform Y shows prominent expression in the gonad starting at stage 15.

It is found in the nucleus. In terms of biological role, putative transcription factor required for axon growth and guidance in the central and peripheral nervous systems. Repels CNS axons away from the midline by promoting the expression of the midline repellent sli and its receptor robo. This Drosophila melanogaster (Fruit fly) protein is Longitudinals lacking protein, isoforms N/O/W/X/Y.